We begin with the raw amino-acid sequence, 140 residues long: Fluoride-specific ion channel FluC 1 (140 aa).

Transmembrane regions (helical) follow at residues 3-23 (TGAT…GAAA), 38-58 (APLW…GLVL), 80-100 (ILYP…STVM), and 113-133 (IAGV…ALWC). Residues glycine 91 and threonine 94 each coordinate Na(+).

Belongs to the fluoride channel Fluc/FEX (TC 1.A.43) family.

It is found in the cell membrane. It carries out the reaction fluoride(in) = fluoride(out). Its activity is regulated as follows. Na(+) is not transported, but it plays an essential structural role and its presence is essential for fluoride channel function. Functionally, fluoride-specific ion channel. Important for reducing fluoride concentration in the cell, thus reducing its toxicity. The chain is Fluoride-specific ion channel FluC 1 from Corynebacterium jeikeium (strain K411).